Reading from the N-terminus, the 416-residue chain is UDP-N-acetylmuramoylalanine--D-glutamate ligase (416 aa).

108–114 contributes to the ATP binding site; that stretch reads GTTGKTT.

The protein belongs to the MurCDEF family.

It localises to the cytoplasm. The catalysed reaction is UDP-N-acetyl-alpha-D-muramoyl-L-alanine + D-glutamate + ATP = UDP-N-acetyl-alpha-D-muramoyl-L-alanyl-D-glutamate + ADP + phosphate + H(+). Its pathway is cell wall biogenesis; peptidoglycan biosynthesis. Functionally, cell wall formation. Catalyzes the addition of glutamate to the nucleotide precursor UDP-N-acetylmuramoyl-L-alanine (UMA). The protein is UDP-N-acetylmuramoylalanine--D-glutamate ligase of Chlamydia trachomatis serovar L2 (strain ATCC VR-902B / DSM 19102 / 434/Bu).